A 279-amino-acid polypeptide reads, in one-letter code: Aldo-keto reductase Mvan_2161 (279 aa).

The active-site Proton donor is Tyr-54. Positions 194, 196, 232, 234, 235, 240, 243, 244, and 270 each coordinate NADPH.

This sequence belongs to the aldo/keto reductase family.

The polypeptide is Aldo-keto reductase Mvan_2161 (Mycolicibacterium vanbaalenii (strain DSM 7251 / JCM 13017 / BCRC 16820 / KCTC 9966 / NRRL B-24157 / PYR-1) (Mycobacterium vanbaalenii)).